The primary structure comprises 483 residues: Trigger factor (483 aa).

Residues 162–243 (GDYVSLDLSA…VRGVKEKELP (82 aa)) enclose the PPIase FKBP-type domain. The disordered stretch occupies residues 459 to 483 (AVAPGDGDATVEPVEPVEAETDGNG). Positions 473 to 483 (EPVEAETDGNG) are enriched in acidic residues.

It belongs to the FKBP-type PPIase family. Tig subfamily.

Its subcellular location is the cytoplasm. The catalysed reaction is [protein]-peptidylproline (omega=180) = [protein]-peptidylproline (omega=0). In terms of biological role, involved in protein export. Acts as a chaperone by maintaining the newly synthesized protein in an open conformation. Functions as a peptidyl-prolyl cis-trans isomerase. This is Trigger factor from Frankia casuarinae (strain DSM 45818 / CECT 9043 / HFP020203 / CcI3).